The following is a 155-amino-acid chain: Endoribonuclease YbeY (155 aa).

Positions 114, 118, and 124 each coordinate Zn(2+).

The protein belongs to the endoribonuclease YbeY family. The cofactor is Zn(2+).

It localises to the cytoplasm. Its function is as follows. Single strand-specific metallo-endoribonuclease involved in late-stage 70S ribosome quality control and in maturation of the 3' terminus of the 16S rRNA. This is Endoribonuclease YbeY from Escherichia coli O81 (strain ED1a).